A 196-amino-acid chain; its full sequence is Ribosome maturation factor RimP (196 aa).

The interval 164–196 (LAPQKPNKPGPKKPGHEKKKPSNESAAGKPRAE) is disordered. Over residues 173 to 182 (GPKKPGHEKK) the composition is skewed to basic residues.

Belongs to the RimP family.

The protein localises to the cytoplasm. Its function is as follows. Required for maturation of 30S ribosomal subunits. The sequence is that of Ribosome maturation factor RimP from Xanthomonas axonopodis pv. citri (strain 306).